A 298-amino-acid chain; its full sequence is Lipoyl synthase (298 aa).

The [4Fe-4S] cluster site is built by cysteine 37, cysteine 42, cysteine 48, cysteine 63, cysteine 67, cysteine 70, and serine 277. Residues tryptophan 49–leucine 266 form the Radical SAM core domain.

This sequence belongs to the radical SAM superfamily. Lipoyl synthase family. Requires [4Fe-4S] cluster as cofactor.

It is found in the cytoplasm. The enzyme catalyses [[Fe-S] cluster scaffold protein carrying a second [4Fe-4S](2+) cluster] + N(6)-octanoyl-L-lysyl-[protein] + 2 oxidized [2Fe-2S]-[ferredoxin] + 2 S-adenosyl-L-methionine + 4 H(+) = [[Fe-S] cluster scaffold protein] + N(6)-[(R)-dihydrolipoyl]-L-lysyl-[protein] + 4 Fe(3+) + 2 hydrogen sulfide + 2 5'-deoxyadenosine + 2 L-methionine + 2 reduced [2Fe-2S]-[ferredoxin]. Its pathway is protein modification; protein lipoylation via endogenous pathway; protein N(6)-(lipoyl)lysine from octanoyl-[acyl-carrier-protein]: step 2/2. Catalyzes the radical-mediated insertion of two sulfur atoms into the C-6 and C-8 positions of the octanoyl moiety bound to the lipoyl domains of lipoate-dependent enzymes, thereby converting the octanoylated domains into lipoylated derivatives. The chain is Lipoyl synthase from Myxococcus xanthus (strain DK1622).